A 423-amino-acid chain; its full sequence is Enolase (423 aa).

Glutamine 164 serves as a coordination point for (2R)-2-phosphoglycerate. The active-site Proton donor is glutamate 206. Mg(2+) is bound by residues aspartate 243, glutamate 289, and aspartate 316. Lysine 341, arginine 370, serine 371, and lysine 392 together coordinate (2R)-2-phosphoglycerate. The active-site Proton acceptor is the lysine 341.

This sequence belongs to the enolase family. Mg(2+) is required as a cofactor.

It localises to the cytoplasm. Its subcellular location is the secreted. The protein resides in the cell surface. It catalyses the reaction (2R)-2-phosphoglycerate = phosphoenolpyruvate + H2O. The protein operates within carbohydrate degradation; glycolysis; pyruvate from D-glyceraldehyde 3-phosphate: step 4/5. Its function is as follows. Catalyzes the reversible conversion of 2-phosphoglycerate (2-PG) into phosphoenolpyruvate (PEP). It is essential for the degradation of carbohydrates via glycolysis. This Desulfotalea psychrophila (strain LSv54 / DSM 12343) protein is Enolase.